The primary structure comprises 370 residues: Nematocyst expressed protein 4 (370 aa).

The first 19 residues, 1–19, serve as a signal peptide directing secretion; it reads MAWTLVLLVLLGTSSCLDA. The interval 34–55 is disordered; that stretch reads SGSGSGEEGSSGSGSAPEPVRD. The span at 36–45 shows a compositional bias: gly residues; sequence SGSGEEGSSG. 3 ShKT domains span residues 70 to 102, 113 to 149, and 155 to 190; these read CLDK…CRFC, CTDA…CKLC, and GKKF…CEVH. Disulfide bonds link cysteine 70-cysteine 102, cysteine 77-cysteine 95, cysteine 84-cysteine 99, cysteine 113-cysteine 149, cysteine 121-cysteine 142, cysteine 131-cysteine 146, cysteine 164-cysteine 183, and cysteine 173-cysteine 187. Positions 306–340 are enriched in pro residues; sequence PYPPPPPPYPEQVPPPPPPPPPPPPPPPYPYPYPY. The segment at 306-370 is disordered; that stretch reads PYPPPPPPYP…HHKENHSKKS (65 aa). Basic residues predominate over residues 349-370; sequence HKSKKHAKHHEKHHKENHSKKS.

This sequence belongs to the NEP3 family. Nematocytes. In late planulae, transcripts are found throughout the ectoderm in nematocytes, with high concentration of expressing cells in the oral pole. In primary polyps, is expressed in nematocytes in the body wall and physa ectoderm and in the upper and lower pharynx.

It localises to the nematocyst. Its subcellular location is the secreted. This Nematostella vectensis (Starlet sea anemone) protein is Nematocyst expressed protein 4.